Consider the following 152-residue polypeptide: Ribosome maturation factor RimP (152 aa).

Belongs to the RimP family.

It localises to the cytoplasm. Its function is as follows. Required for maturation of 30S ribosomal subunits. In Brevibacillus brevis (strain 47 / JCM 6285 / NBRC 100599), this protein is Ribosome maturation factor RimP.